The following is a 504-amino-acid chain: Anaerobic nitric oxide reductase transcription regulator NorR (504 aa).

At aspartate 57 the chain carries 4-aspartylphosphate. The Sigma-54 factor interaction domain occupies methionine 187–valine 416. Residues glycine 215–glutamate 222 and alanine 278–glutamate 287 each bind ATP. The segment at residues tryptophan 479–lysine 498 is a DNA-binding region (H-T-H motif).

It participates in nitrogen metabolism; nitric oxide reduction. Its function is as follows. Required for the expression of anaerobic nitric oxide (NO) reductase, acts as a transcriptional activator for at least the norVW operon. Activation also requires sigma-54. This is Anaerobic nitric oxide reductase transcription regulator NorR from Shigella dysenteriae serotype 1 (strain Sd197).